A 218-amino-acid polypeptide reads, in one-letter code: Peptidase E (218 aa).

Active-site charge relay system residues include Ser123, Asp138, and His160.

Belongs to the peptidase S51 family.

The protein resides in the cytoplasm. It catalyses the reaction Dipeptidase E catalyzes the hydrolysis of dipeptides Asp-|-Xaa. It does not act on peptides with N-terminal Glu, Asn or Gln, nor does it cleave isoaspartyl peptides.. Functionally, hydrolyzes dipeptides containing N-terminal aspartate residues. May play a role in allowing the cell to use peptide aspartate to spare carbon otherwise required for the synthesis of the aspartate family of amino acids. This chain is Peptidase E, found in Haemophilus influenzae (strain ATCC 51907 / DSM 11121 / KW20 / Rd).